A 264-amino-acid polypeptide reads, in one-letter code: Thymidylate synthase (264 aa).

Residues Arg-21 and 126–127 (RR) contribute to the dUMP site. Cys-146 (nucleophile) is an active-site residue. Residues 166-169 (RSAD), Asn-177, and 207-209 (HLY) each bind dUMP. Asp-169 is a (6R)-5,10-methylene-5,6,7,8-tetrahydrofolate binding site. Position 263 (Ala-263) interacts with (6R)-5,10-methylene-5,6,7,8-tetrahydrofolate.

Belongs to the thymidylate synthase family. Bacterial-type ThyA subfamily. In terms of assembly, homodimer.

The protein localises to the cytoplasm. The enzyme catalyses dUMP + (6R)-5,10-methylene-5,6,7,8-tetrahydrofolate = 7,8-dihydrofolate + dTMP. It participates in pyrimidine metabolism; dTTP biosynthesis. Catalyzes the reductive methylation of 2'-deoxyuridine-5'-monophosphate (dUMP) to 2'-deoxythymidine-5'-monophosphate (dTMP) while utilizing 5,10-methylenetetrahydrofolate (mTHF) as the methyl donor and reductant in the reaction, yielding dihydrofolate (DHF) as a by-product. This enzymatic reaction provides an intracellular de novo source of dTMP, an essential precursor for DNA biosynthesis. This chain is Thymidylate synthase, found in Afipia carboxidovorans (strain ATCC 49405 / DSM 1227 / KCTC 32145 / OM5) (Oligotropha carboxidovorans).